Reading from the N-terminus, the 122-residue chain is Large ribosomal subunit protein uL14 (122 aa).

This sequence belongs to the universal ribosomal protein uL14 family. In terms of assembly, part of the 50S ribosomal subunit. Forms a cluster with proteins L3 and L19. In the 70S ribosome, L14 and L19 interact and together make contacts with the 16S rRNA in bridges B5 and B8.

Functionally, binds to 23S rRNA. Forms part of two intersubunit bridges in the 70S ribosome. The protein is Large ribosomal subunit protein uL14 of Renibacterium salmoninarum (strain ATCC 33209 / DSM 20767 / JCM 11484 / NBRC 15589 / NCIMB 2235).